Here is an 867-residue protein sequence, read N- to C-terminus: Nitrate reductase [NADPH] (867 aa).

Positions 38–58 are disordered; the sequence is DIPLPPPSKEPTEVLSIDKPT. Mo-molybdopterin is bound at residue Cys-152. The Cytochrome b5 heme-binding domain maps to 514-589; it reads NRIIDLQEFK…MPDYHIGTMD (76 aa). 2 residues coordinate heme: His-549 and His-572. Positions 615 to 726 constitute an FAD-binding FR-type domain; the sequence is KSWTKATLVK…KGPTGRFEYL (112 aa). FAD-binding positions include 669–672, 686–690, Phe-691, 700–702, and Thr-753; these read RSYT, LVKIY, and KMT. 837-846 serves as a coordination point for NADP(+); it reads MVLICGPEAM.

The protein belongs to the nitrate reductase family. In terms of assembly, homodimer. FAD serves as cofactor. Requires heme as cofactor. It depends on Mo-molybdopterin as a cofactor.

It carries out the reaction nitrite + NADP(+) + H2O = nitrate + NADPH + H(+). Functionally, nitrate reductase is a key enzyme involved in the first step of nitrate assimilation in plants, fungi and bacteria. The polypeptide is Nitrate reductase [NADPH] (niaD) (Aspergillus niger).